Here is a 228-residue protein sequence, read N- to C-terminus: Phosphoglycolate phosphatase (228 aa).

The Nucleophile role is filled by aspartate 9. Residues aspartate 9 and aspartate 11 each contribute to the Mg(2+) site. Substrate is bound at residue lysine 151. Mg(2+) is bound by residues aspartate 174 and aspartate 178.

It belongs to the archaeal SPP-like hydrolase family. The cofactor is Mg(2+).

The enzyme catalyses 2-phosphoglycolate + H2O = glycolate + phosphate. In terms of biological role, catalyzes the dephosphorylation of 2-phosphoglycolate. The polypeptide is Phosphoglycolate phosphatase (Pyrobaculum neutrophilum (strain DSM 2338 / JCM 9278 / NBRC 100436 / V24Sta) (Thermoproteus neutrophilus)).